The primary structure comprises 419 residues: L-rhamnose isomerase (419 aa).

3 residues coordinate Mn(2+): His262, Asp294, and Asp296.

It belongs to the rhamnose isomerase family. In terms of assembly, homotetramer. Mn(2+) serves as cofactor.

It is found in the cytoplasm. The catalysed reaction is L-rhamnopyranose = L-rhamnulose. Its pathway is carbohydrate degradation; L-rhamnose degradation; glycerone phosphate from L-rhamnose: step 1/3. Functionally, catalyzes the interconversion of L-rhamnose and L-rhamnulose. This chain is L-rhamnose isomerase, found in Shigella flexneri serotype 5b (strain 8401).